The sequence spans 58 residues: UPF0391 membrane protein Shew185_1413 (58 aa).

2 consecutive transmembrane segments (helical) span residues 6–26 (LVFL…IAGA) and 28–48 (AGIA…SLLI).

The protein belongs to the UPF0391 family.

The protein resides in the cell membrane. This is UPF0391 membrane protein Shew185_1413 from Shewanella baltica (strain OS185).